Reading from the N-terminus, the 781-residue chain is Aconitate hydratase, mitochondrial (781 aa).

The transit peptide at 1 to 27 (MAPYSLLVTRLQKALGVRQYHVASVLC) directs the protein to the mitochondrion. Q28 is modified (pyrrolidone carboxylic acid). K31 carries the N6-succinyllysine modification. The residue at position 50 (K50) is an N6-acetyllysine; alternate. K50 is subject to N6-succinyllysine; alternate. Residue Q99 coordinates substrate. An N6-acetyllysine; alternate mark is found at K138 and K144. 2 positions are modified to N6-succinyllysine; alternate: K138 and K144. Residue 192–194 (DSH) coordinates substrate. K233 is modified (N6-acetyllysine; alternate). N6-succinyllysine; alternate is present on K233. Residue C385 participates in [4Fe-4S] cluster binding. Residue K411 is modified to N6-succinyllysine. [4Fe-4S] cluster is bound by residues C448 and C451. Residues R474 and R479 each contribute to the substrate site. Residues K517 and K523 each carry the N6-acetyllysine; alternate modification. N6-succinyllysine; alternate occurs at positions 517 and 523. A compositionally biased stretch (basic and acidic residues) spans 524 to 537 (LEAPDADELPRAEF). The segment at 524 to 561 (LEAPDADELPRAEFDPGQDTYQHPPKDSSGQRVDVSPT) is disordered. Position 549 is an N6-succinyllysine (K549). Over residues 551 to 561 (SSGQRVDVSPT) the composition is skewed to polar residues. At S559 the chain carries Phosphoserine. At K573 the chain carries N6-acetyllysine; alternate. N6-succinyllysine; alternate is present on K573. N6-succinyllysine occurs at positions 577 and 591. The residue at position 605 (K605) is an N6-acetyllysine; alternate. Residue K605 is modified to N6-succinyllysine; alternate. A substrate-binding site is contributed by R607. At K628 the chain carries N6-succinyllysine. The residue at position 670 (S670) is a Phosphoserine. 670–671 (SR) contacts substrate. Residue K689 is modified to N6-succinyllysine. N6-acetyllysine; alternate occurs at positions 723 and 730. An N6-succinyllysine; alternate mark is found at K723 and K730. K736, K739, and K743 each carry N6-acetyllysine.

Belongs to the aconitase/IPM isomerase family. In terms of assembly, monomer. The cofactor is [4Fe-4S] cluster. In terms of processing, forms covalent cross-links mediated by transglutaminase TGM2, between a glutamine and the epsilon-amino group of a lysine residue, forming homopolymers and heteropolymers.

The protein resides in the mitochondrion. It catalyses the reaction citrate = D-threo-isocitrate. It participates in carbohydrate metabolism; tricarboxylic acid cycle; isocitrate from oxaloacetate: step 2/2. Its function is as follows. Catalyzes the isomerization of citrate to isocitrate via cis-aconitate. The chain is Aconitate hydratase, mitochondrial (ACO2) from Sus scrofa (Pig).